The primary structure comprises 257 residues: Ribonuclease HII (257 aa).

The RNase H type-2 domain maps to 72–257 (TYIAGIDEVG…FAPIKDMIQK (186 aa)). A divalent metal cation-binding residues include aspartate 78, glutamate 79, and aspartate 170.

Belongs to the RNase HII family. It depends on Mn(2+) as a cofactor. Mg(2+) serves as cofactor.

Its subcellular location is the cytoplasm. It catalyses the reaction Endonucleolytic cleavage to 5'-phosphomonoester.. Functionally, endonuclease that specifically degrades the RNA of RNA-DNA hybrids. The sequence is that of Ribonuclease HII from Bacillus cereus (strain ATCC 10987 / NRS 248).